Consider the following 305-residue polypeptide: uncharacterized protein (305 aa).

In terms of domain architecture, ABC transporter spans 5–233; that stretch reads LELKNVTKNI…ENDTYFFQVE (229 aa). ATP is bound at residue 37-44; the sequence is GPNGAGKT.

This sequence belongs to the ABC transporter superfamily.

This is an uncharacterized protein from Bacillus subtilis (strain 168).